The sequence spans 62 residues: 6.7 kDa chloroplast outer envelope membrane protein (62 aa).

Residues 1-17 (MESVAKPATTKEGSAKQ) are Chloroplast intermembrane-facing. A helical membrane pass occupies residues 18 to 40 (AAIVVGVLALGWFAIQVAFIPLF). At 41–62 (NKVRGGGSDKKDDDVNAFTPDT) the chain is on the cytoplasmic side.

It localises to the plastid. It is found in the chloroplast outer membrane. The sequence is that of 6.7 kDa chloroplast outer envelope membrane protein from Spinacia oleracea (Spinach).